The sequence spans 131 residues: Small ribosomal subunit protein uS8 (131 aa).

The protein belongs to the universal ribosomal protein uS8 family. As to quaternary structure, part of the 30S ribosomal subunit. Contacts proteins S5 and S12.

Its function is as follows. One of the primary rRNA binding proteins, it binds directly to 16S rRNA central domain where it helps coordinate assembly of the platform of the 30S subunit. This chain is Small ribosomal subunit protein uS8, found in Mycoplasmopsis agalactiae (strain NCTC 10123 / CIP 59.7 / PG2) (Mycoplasma agalactiae).